We begin with the raw amino-acid sequence, 187 residues long: Ribosome maturation factor RimM (187 aa).

One can recognise a PRC barrel domain in the interval 91 to 183 (DDGFYDHELE…ILVLTPPEGL (93 aa)).

Belongs to the RimM family. Binds ribosomal protein uS19.

It localises to the cytoplasm. In terms of biological role, an accessory protein needed during the final step in the assembly of 30S ribosomal subunit, possibly for assembly of the head region. Essential for efficient processing of 16S rRNA. May be needed both before and after RbfA during the maturation of 16S rRNA. It has affinity for free ribosomal 30S subunits but not for 70S ribosomes. The chain is Ribosome maturation factor RimM from Corynebacterium jeikeium (strain K411).